Reading from the N-terminus, the 198-residue chain is Segregation and condensation protein B (198 aa).

Residues 168–198 (KLADPATDEPDQNEMDLFFDRFNQSKEQEEE) form a disordered region.

This sequence belongs to the ScpB family. As to quaternary structure, homodimer. Homodimerization may be required to stabilize the binding of ScpA to the Smc head domains. Component of a cohesin-like complex composed of ScpA, ScpB and the Smc homodimer, in which ScpA and ScpB bind to the head domain of Smc. The presence of the three proteins is required for the association of the complex with DNA.

The protein localises to the cytoplasm. Its function is as follows. Participates in chromosomal partition during cell division. May act via the formation of a condensin-like complex containing Smc and ScpA that pull DNA away from mid-cell into both cell halves. This Listeria monocytogenes serotype 4b (strain CLIP80459) protein is Segregation and condensation protein B.